The following is a 207-amino-acid chain: NADH-quinone oxidoreductase subunit C (207 aa).

The protein belongs to the complex I 30 kDa subunit family. NDH-1 is composed of 14 different subunits. Subunits NuoB, C, D, E, F, and G constitute the peripheral sector of the complex.

The protein localises to the cell inner membrane. It catalyses the reaction a quinone + NADH + 5 H(+)(in) = a quinol + NAD(+) + 4 H(+)(out). In terms of biological role, NDH-1 shuttles electrons from NADH, via FMN and iron-sulfur (Fe-S) centers, to quinones in the respiratory chain. The immediate electron acceptor for the enzyme in this species is believed to be ubiquinone. Couples the redox reaction to proton translocation (for every two electrons transferred, four hydrogen ions are translocated across the cytoplasmic membrane), and thus conserves the redox energy in a proton gradient. This Thermus thermophilus (strain ATCC BAA-163 / DSM 7039 / HB27) protein is NADH-quinone oxidoreductase subunit C.